The sequence spans 84 residues: Small ribosomal subunit protein bS20 (84 aa).

It belongs to the bacterial ribosomal protein bS20 family.

In terms of biological role, binds directly to 16S ribosomal RNA. In Porphyromonas gingivalis (strain ATCC 33277 / DSM 20709 / CIP 103683 / JCM 12257 / NCTC 11834 / 2561), this protein is Small ribosomal subunit protein bS20.